We begin with the raw amino-acid sequence, 318 residues long: Ribokinase (318 aa).

Substrate-binding positions include Asn-12–Asp-14, Gly-40–Asn-44, and Glu-141. ATP is bound by residues Asn-188 and Thr-235 to Gly-240. Asp-264 and Ser-266 together coordinate K(+). Residue Gly-269–Asp-270 coordinates ATP. Substrate is bound at residue Asp-270. Asp-270 functions as the Proton acceptor in the catalytic mechanism. Ser-301, Arg-304, Gly-306, and Ser-310 together coordinate K(+).

This sequence belongs to the carbohydrate kinase PfkB family. Ribokinase subfamily. Homodimer. It depends on Mg(2+) as a cofactor.

It is found in the cytoplasm. The protein resides in the nucleus. It catalyses the reaction D-ribose + ATP = D-ribose 5-phosphate + ADP + H(+). The protein operates within carbohydrate metabolism; D-ribose degradation; D-ribose 5-phosphate from beta-D-ribopyranose: step 2/2. Activated by a monovalent cation that binds near, but not in, the active site. The most likely occupant of the site in vivo is potassium. Ion binding induces a conformational change that may alter substrate affinity. Its function is as follows. Catalyzes the phosphorylation of ribose at O-5 in a reaction requiring ATP and magnesium. The resulting D-ribose-5-phosphate can then be used either for sythesis of nucleotides, histidine, and tryptophan, or as a component of the pentose phosphate pathway. The sequence is that of Ribokinase (rbsk) from Dictyostelium discoideum (Social amoeba).